Reading from the N-terminus, the 689-residue chain is DNA ligase (689 aa).

NAD(+) is bound by residues 51–55 (DSEYD), 100–101 (SL), and E129. The N6-AMP-lysine intermediate role is filled by K131. The NAD(+) site is built by R152, E189, K308, and K332. 4 residues coordinate Zn(2+): C426, C429, C444, and C450. One can recognise a BRCT domain in the interval 609–689 (ADEQPLKGQT…ELLALLAANS (81 aa)).

This sequence belongs to the NAD-dependent DNA ligase family. LigA subfamily. It depends on Mg(2+) as a cofactor. Mn(2+) serves as cofactor.

It catalyses the reaction NAD(+) + (deoxyribonucleotide)n-3'-hydroxyl + 5'-phospho-(deoxyribonucleotide)m = (deoxyribonucleotide)n+m + AMP + beta-nicotinamide D-nucleotide.. DNA ligase that catalyzes the formation of phosphodiester linkages between 5'-phosphoryl and 3'-hydroxyl groups in double-stranded DNA using NAD as a coenzyme and as the energy source for the reaction. It is essential for DNA replication and repair of damaged DNA. In Shewanella sp. (strain ANA-3), this protein is DNA ligase.